A 182-amino-acid chain; its full sequence is uncharacterized protein (182 aa).

This is an uncharacterized protein from Haemophilus influenzae (strain ATCC 51907 / DSM 11121 / KW20 / Rd).